The chain runs to 397 residues: CCA-adding enzyme (397 aa).

ATP is bound by residues G32 and R35. Positions 32 and 35 each coordinate CTP. 2 residues coordinate Mg(2+): D45 and D47. ATP contacts are provided by R116, D159, R162, R165, and R168. R116, D159, R162, R165, and R168 together coordinate CTP.

It belongs to the tRNA nucleotidyltransferase/poly(A) polymerase family. Bacterial CCA-adding enzyme type 3 subfamily. Homodimer. It depends on Mg(2+) as a cofactor.

It catalyses the reaction a tRNA precursor + 2 CTP + ATP = a tRNA with a 3' CCA end + 3 diphosphate. The enzyme catalyses a tRNA with a 3' CCA end + 2 CTP + ATP = a tRNA with a 3' CCACCA end + 3 diphosphate. In terms of biological role, catalyzes the addition and repair of the essential 3'-terminal CCA sequence in tRNAs without using a nucleic acid template. Adds these three nucleotides in the order of C, C, and A to the tRNA nucleotide-73, using CTP and ATP as substrates and producing inorganic pyrophosphate. tRNA 3'-terminal CCA addition is required both for tRNA processing and repair. Also involved in tRNA surveillance by mediating tandem CCA addition to generate a CCACCA at the 3' terminus of unstable tRNAs. While stable tRNAs receive only 3'-terminal CCA, unstable tRNAs are marked with CCACCA and rapidly degraded. This Levilactobacillus brevis (strain ATCC 367 / BCRC 12310 / CIP 105137 / JCM 1170 / LMG 11437 / NCIMB 947 / NCTC 947) (Lactobacillus brevis) protein is CCA-adding enzyme.